The sequence spans 78 residues: Biotin synthase auxiliary protein (78 aa).

The protein belongs to the BsaP family. Iron-sulfur cluster serves as cofactor.

Required for the activity of the biotin synthase BioB. This Mycolicibacterium smegmatis (strain ATCC 700084 / mc(2)155) (Mycobacterium smegmatis) protein is Biotin synthase auxiliary protein.